A 341-amino-acid polypeptide reads, in one-letter code: MPSWIPLPAFCCLLLPWAFTVFHKTLGNPAPHPGPHYLLPPIHEVIHSRRGATATLPCVLGTSPPSYKVRWSKVEPGELRETLILITNGLHARDYGLLGGRASLRRGHRLDASLIIKNVRLEDEGRYRCELINGIEDESVALTLRLEGVVFPYQPSRGRYQFNYFEAKRACEEQDGRLATYSQLYQAWTEGLDWCNAGWLLEGSVRYPVLNARAPCGGHGRPGIRSYGPRDRSRDRYDAFCFTSALAGQVFFVPGRLTLSEAHAVCRRRGAVVAKVGHLYAAWKFSGLDRCDGGWLADGSVRFPITTPRPRCGGLPDPGVRSFGFPRPQQAAYGTYCYAEK.

The signal sequence occupies residues 1 to 27 (MPSWIPLPAFCCLLLPWAFTVFHKTLG). In terms of domain architecture, Ig-like V-type spans 35–143 (PHYLLPPIHE…GIEDESVALT (109 aa)). Intrachain disulfides connect cysteine 58–cysteine 129, cysteine 171–cysteine 241, cysteine 195–cysteine 216, cysteine 266–cysteine 337, and cysteine 291–cysteine 312. Link domains follow at residues 149–243 (VVFP…FCFT) and 246–339 (LAGQ…YCYA).

Belongs to the HAPLN family. Brain.

Its subcellular location is the secreted. The protein resides in the extracellular space. It is found in the extracellular matrix. Its function is as follows. Mediates a firm binding of versican V2 to hyaluronic acid. May play a pivotal role in the formation of the hyaluronan-associated matrix in the central nervous system (CNS) which facilitates neuronal conduction and general structural stabilization. Binds to hyaluronic acid. The chain is Hyaluronan and proteoglycan link protein 2 (Hapln2) from Rattus norvegicus (Rat).